The following is a 308-amino-acid chain: Elongation factor Ts (308 aa).

Positions 80–83 (TDFV) are involved in Mg(2+) ion dislocation from EF-Tu.

Belongs to the EF-Ts family.

The protein resides in the cytoplasm. Its function is as follows. Associates with the EF-Tu.GDP complex and induces the exchange of GDP to GTP. It remains bound to the aminoacyl-tRNA.EF-Tu.GTP complex up to the GTP hydrolysis stage on the ribosome. In Rhodopseudomonas palustris (strain BisB18), this protein is Elongation factor Ts.